Consider the following 471-residue polypeptide: Mannose-1-phosphate guanylyltransferase (471 aa).

This sequence belongs to the mannose-6-phosphate isomerase type 2 family.

It catalyses the reaction alpha-D-mannose 1-phosphate + GTP + H(+) = GDP-alpha-D-mannose + diphosphate. It participates in nucleotide-sugar biosynthesis; GDP-alpha-D-mannose biosynthesis; GDP-alpha-D-mannose from alpha-D-mannose 1-phosphate (GTP route): step 1/1. Involved in the biosynthesis of the K2 capsular polysaccharide biosynthesis. This is Mannose-1-phosphate guanylyltransferase (manC) from Klebsiella pneumoniae.